The following is a 391-amino-acid chain: Heme A synthase (391 aa).

A run of 8 helical transmembrane segments spans residues 37-57 (IRLW…VGGL), 121-141 (RQLG…FLAA), 152-172 (LLAL…MVAS), 186-206 (LATH…QALL), 229-249 (TTVL…VAGI), 298-318 (FLHR…WIFG), 332-352 (LLAM…LSAA), and 354-374 (WQVA…ILHA). His-300 contacts heme. His-360 contacts heme.

Belongs to the COX15/CtaA family. Type 2 subfamily. Interacts with CtaB. It depends on heme b as a cofactor.

It localises to the cell membrane. It carries out the reaction Fe(II)-heme o + 2 A + H2O = Fe(II)-heme a + 2 AH2. It functions in the pathway porphyrin-containing compound metabolism; heme A biosynthesis; heme A from heme O: step 1/1. In terms of biological role, catalyzes the conversion of heme O to heme A by two successive hydroxylations of the methyl group at C8. The first hydroxylation forms heme I, the second hydroxylation results in an unstable dihydroxymethyl group, which spontaneously dehydrates, resulting in the formyl group of heme A. In Cereibacter sphaeroides (strain ATCC 17029 / ATH 2.4.9) (Rhodobacter sphaeroides), this protein is Heme A synthase.